The chain runs to 307 residues: Zygote arrest protein 2.L (307 aa).

Positions L138–K200 are disordered. Basic and acidic residues predominate over residues L156–P186. The 3CxxC-type zinc-finger motif lies at Q208–K293.

Belongs to the ZAR1 family. In terms of tissue distribution, expressed in oocytes.

It localises to the cytoplasm. It is found in the cytoplasmic ribonucleoprotein granule. Its function is as follows. mRNA-binding protein required for maternal mRNA storage, translation and degradation during oocyte maturation. Probably promotes formation of some phase-separated membraneless compartment that stores maternal mRNAs in oocytes: acts by undergoing liquid-liquid phase separation upon binding to maternal mRNAs. Binds to the 3'-UTR of maternal mRNAs, inhibiting their translation. The sequence is that of Zygote arrest protein 2.L (zar2.L) from Xenopus laevis (African clawed frog).